The chain runs to 329 residues: G-protein coupled receptor 3 (329 aa).

At methionine 1–aspartate 43 the chain is on the extracellular side. An N-linked (GlcNAc...) asparagine glycan is attached at asparagine 20. The chain crosses the membrane as a helical span at residues valine 44–isoleucine 64. Over valine 65–proline 73 the chain is Cytoplasmic. A helical membrane pass occupies residues methionine 74 to leucine 94. Over histidine 95–serine 108 the chain is Extracellular. The helical transmembrane segment at leucine 109–isoleucine 129 threads the bilayer. The Cytoplasmic segment spans residues threonine 130–tyrosine 153. Residues valine 154–tryptophan 174 form a helical membrane-spanning segment. Over asparagine 175–asparagine 192 the chain is Extracellular. A helical transmembrane segment spans residues histidine 193 to alanine 213. At glutamine 214–threonine 247 the chain is on the cytoplasmic side. The chain crosses the membrane as a helical span at residues leucine 248–leucine 268. At glycine 269–tyrosine 277 the chain is on the extracellular side. The helical transmembrane segment at threonine 278–phenylalanine 298 threads the bilayer. Residues arginine 299–valine 329 lie on the Cytoplasmic side of the membrane. Cysteine 312 is lipidated: S-palmitoyl cysteine. Phosphoserine is present on residues serine 323, serine 325, and serine 327.

This sequence belongs to the G-protein coupled receptor 1 family. Abundantly expressed in granule neurons at all development stages. Enriched in the longest tips of neurites during differentiation of hippocampal neurons.

It is found in the cell membrane. In terms of biological role, constitutively active G-protein coupled receptor that maintains high 3'-5'-cyclic adenosine monophosphate (cAMP) levels that a plays a role in serveral processes including meiotic arrest in oocytes or neuronal development via activation of numerous intracellular signaling pathways. Acts as an essential activator of thermogenic adipocytes and drives thermogenesis via its intrinsic G(s)-coupling activity without the requirement of a ligand. Has a potential role in modulating a number of brain functions, including behavioral responses to stress, amyloid-beta peptide generation in neurons. Stimulates neurite outgrowth in cerebellar granular neurons modulated via PKA, ERK, and most strongly PI3K-mediated signaling pathways. This is G-protein coupled receptor 3 (Gpr3) from Rattus norvegicus (Rat).